The sequence spans 396 residues: Elongation factor Tu (396 aa).

The 195-residue stretch at 11–205 folds into the tr-type G domain; it reads KPHVNIGTIG…TVDEYIPTPE (195 aa). The G1 stretch occupies residues 20–27; sequence GHVDHGKT. 20–27 is a GTP binding site; sequence GHVDHGKT. Position 27 (Thr-27) interacts with Mg(2+). The tract at residues 61-65 is G2; the sequence is GITIN. Residues 82–85 form a G3 region; the sequence is DAPG. Residues 82 to 86 and 137 to 140 contribute to the GTP site; these read DAPGH and NKVD. The G4 stretch occupies residues 137–140; sequence NKVD. A G5 region spans residues 175–177; the sequence is SAL.

The protein belongs to the TRAFAC class translation factor GTPase superfamily. Classic translation factor GTPase family. EF-Tu/EF-1A subfamily. In terms of assembly, monomer.

Its subcellular location is the cytoplasm. The enzyme catalyses GTP + H2O = GDP + phosphate + H(+). Its function is as follows. GTP hydrolase that promotes the GTP-dependent binding of aminoacyl-tRNA to the A-site of ribosomes during protein biosynthesis. The chain is Elongation factor Tu from Lactobacillus gasseri (strain ATCC 33323 / DSM 20243 / BCRC 14619 / CIP 102991 / JCM 1131 / KCTC 3163 / NCIMB 11718 / NCTC 13722 / AM63).